We begin with the raw amino-acid sequence, 357 residues long: Thiamine thiazole synthase 3, chloroplastic (357 aa).

A chloroplast-targeting transit peptide spans 1 to 51 (MSISAAGVATGLGANVELKSNVGSSSSSVAGVRLFTSRKAQLRRCAAPATS). Substrate-binding positions include Ala-103, 123-124 (EQ), Gly-131, and Ala-196. Cys-225 carries the post-translational modification 2,3-didehydroalanine (Cys). Residues Asp-227, His-242, Met-294, and 304–306 (RMG) contribute to the substrate site.

Belongs to the THI4 family. As to quaternary structure, homooctamer. Fe cation is required as a cofactor. In terms of processing, during the catalytic reaction, a sulfide is transferred from Cys-225 to a reaction intermediate, generating a dehydroalanine residue.

The protein resides in the plastid. It localises to the chloroplast. The enzyme catalyses [ADP-thiazole synthase]-L-cysteine + glycine + NAD(+) = [ADP-thiazole synthase]-dehydroalanine + ADP-5-ethyl-4-methylthiazole-2-carboxylate + nicotinamide + 3 H2O + 2 H(+). Involved in biosynthesis of the thiamine precursor thiazole. Catalyzes the conversion of NAD and glycine to adenosine diphosphate 5-(2-hydroxyethyl)-4-methylthiazole-2-carboxylic acid (ADT), an adenylated thiazole intermediate. The reaction includes an iron-dependent sulfide transfer from a conserved cysteine residue of the protein to a thiazole intermediate. The enzyme can only undergo a single turnover, which suggests it is a suicide enzyme. May have additional roles in adaptation to various stress conditions and in DNA damage tolerance. This is Thiamine thiazole synthase 3, chloroplastic from Physcomitrium patens (Spreading-leaved earth moss).